A 243-amino-acid polypeptide reads, in one-letter code: Probable 2-phosphosulfolactate phosphatase (243 aa).

The protein belongs to the ComB family. Mg(2+) is required as a cofactor.

The enzyme catalyses (2R)-O-phospho-3-sulfolactate + H2O = (2R)-3-sulfolactate + phosphate. This Prochlorococcus marinus (strain SARG / CCMP1375 / SS120) protein is Probable 2-phosphosulfolactate phosphatase.